We begin with the raw amino-acid sequence, 150 residues long: DNA-directed RNA polymerases I, II, and III subunit RPABC3 (150 aa).

At A2 the chain carries N-acetylalanine.

It belongs to the eukaryotic RPB8 RNA polymerase subunit family. In terms of assembly, component of the RNA polymerase I (Pol I), RNA polymerase II (Pol II) and RNA polymerase III (Pol III) complexes consisting of at least 13, 12 and 17 subunits, respectively. Pol I complex consists of a ten-subunit catalytic core composed of POLR1A/RPA1, POLR1B/RPA2, POLR1C/RPAC1, POLR1D/RPAC2, POLR1H/RPA12, POLR2E/RPABC1, POLR2F/RPABC2, POLR2H/RPABC3, POLR2K/RPABC4 and POLR2L/RPABC5; a mobile stalk subunit POLR1F/RPA43 protruding from the core and additional subunits homologous to general transcription factors POLR1E/RPA49 and POLR1G/RPA34. Part of Pol I pre-initiation complex (PIC), in which Pol I core assembles with RRN3 and promoter-bound UTBF and SL1/TIF-IB complex. Pol II complex contains a ten-subunit catalytic core composed of POLR2A/RPB1, POLR2B/RPB2, POLR2C/RPB3, POLR2I/RPB9, POLR2J/RPB11, POLR2E/RPABC1, POLR2F/RPABC2, POLR2H/RPABC3, POLR2K/RPABC4 and POLR2L/RPABC5 and a mobile stalk composed of two subunits POLR2D/RPB4 and POLR2G/RPB7. Part of Pol II(G) complex, in which Pol II core associates with an additional subunit POLR2M; unlike conventional Pol II, Pol II(G) functions as a transcriptional repressor. Part of Pol II pre-initiation complex (PIC), in which Pol II core assembles with Mediator, general transcription factors and other specific initiation factors including GTF2E1, GTF2E2, GTF2F1, GTF2F2, TCEA1, ERCC2, ERCC3, GTF2H2, GTF2H3, GTF2H4, GTF2H5, GTF2A1, GTF2A2, GTF2B and TBP; this large multi-subunit PIC complex mediates DNA unwinding and targets Pol II core to the transcription start site where the first phosphodiester bond forms. Directly interacts with POLR2A. Pol III complex consists of a ten-subunit catalytic core composed of POLR3A/RPC1, POLR3B/RPC2, POLR1C/RPAC1, POLR1D/RPAC2, POLR3K/RPC10, POLR2E/RPABC1, POLR2F/RPABC2, POLR2H/RPABC3, POLR2K/RPABC4 and POLR2L/RPABC5; a mobile stalk composed of two subunits POLR3H/RPC8 and CRCP/RPC9, protruding from the core and functioning primarily in transcription initiation; and additional subunits homologous to general transcription factors of the RNA polymerase II machinery, POLR3C/RPC3-POLR3F/RPC6-POLR3G/RPC7 heterotrimer required for transcription initiation and POLR3D/RPC4-POLR3E/RPC5 heterodimer involved in both transcription initiation and termination.

Its subcellular location is the nucleus. It is found in the nucleolus. DNA-dependent RNA polymerase catalyzes the transcription of DNA into RNA using the four ribonucleoside triphosphates as substrates. Common component of RNA polymerases I, II and III which synthesize ribosomal RNA precursors, mRNA precursors and many functional non-coding RNAs, and small RNAs, such as 5S rRNA and tRNAs, respectively. The protein is DNA-directed RNA polymerases I, II, and III subunit RPABC3 (POLR2H) of Bos taurus (Bovine).